Here is a 977-residue protein sequence, read N- to C-terminus: Dynamin-like GTPase OPA1, mitochondrial (977 aa).

The N-terminal 86 residues, 1–86 (MWRTKAAAAC…VKYGYQSYRN (86 aa)), are a transit peptide targeting the mitochondrion. Over 87-95 (FWLARLASR) the chain is Mitochondrial matrix. The helical transmembrane segment at 96-112 (LLKIRYLILGSAVGGGY) threads the bilayer. At 113–787 (TAKKTYDQWE…SVIEDMVGPD (675 aa)) the chain is on the mitochondrial intermembrane side. Residues 224–271 (KKVSDKEKIDQLQEELLRTQLKYQRMLERLEKENKELRKLVLQRDDKG) are a coiled coil. The region spanning 302 to 578 (QDHLPRVVVV…FWKMVRESVE (277 aa)) is the Dynamin-type G domain. Residues 312 to 319 (GDQSAGKT) form a G1 motif region. Residues Ser315, Gly317, Lys318, Thr319, Ser320, and Gly334 each coordinate GTP. Thr319 contacts Mg(2+). Residues 338 to 341 (MMTR) form a G2 motif region. 2 residues coordinate Mg(2+): Thr340 and Asp415. The segment at 415–418 (DLPG) is G3 motif. The interval 484–487 (TKVD) is G4 motif. Residues Lys485, Asp487, and Thr520 each contribute to the GTP site. The tract at residues 518–521 (VVTG) is G5 motif. Stalk region stretches follow at residues 606 to 853 (DRNE…IKDT) and 891 to 945 (CNDI…VKLL). Residues 753–873 (SDKQQWDAAI…KTALNHCNLC (121 aa)) are paddle region. The stretch at 788–798 (WKKRWLYWISR) is an intramembrane region. At 799 to 977 (TKEQNIRNET…AFIEALHQEK (179 aa)) the chain is on the mitochondrial intermembrane side. Cysteines 873 and 891 form a disulfide. Residues 911–977 (LRQQLTNTEV…AFIEALHQEK (67 aa)) adopt a coiled-coil conformation.

This sequence belongs to the TRAFAC class dynamin-like GTPase superfamily. Dynamin/Fzo/YdjA family. Oligomeric complex consisting of membrane-bound and soluble forms of OPA1. Post-translationally, cleaved by OMA1 or YME1L downstream of the transmembrane region in response to different signals to generate soluble forms. Cleaved by OMA1 at position S1 following stress conditions, generating the short soluble form (Dynamin-like GTPase OPA1, short form; S-OPA1).

It is found in the mitochondrion inner membrane. It localises to the mitochondrion intermembrane space. The enzyme catalyses GTP + H2O = GDP + phosphate + H(+). Dynamin-related GTPase that is essential for normal mitochondrial morphology by mediating fusion of the mitochondrial inner membranes, regulating cristae morphology and maintaining respiratory chain function. Exists in two forms: the transmembrane, long form (Dynamin-like GTPase OPA1, long form; L-OPA1), which is tethered to the inner mitochondrial membrane, and the short soluble form (Dynamin-like GTPase OPA1, short form; S-OPA1), which results from proteolytic cleavage and localizes in the intermembrane space. Both forms (L-OPA1 and S-OPA1) cooperate to catalyze the fusion of the mitochondrial inner membrane. The equilibrium between L-OPA1 and S-OPA1 is essential: excess levels of S-OPA1, produced by cleavage by OMA1 following loss of mitochondrial membrane potential, lead to an impaired equilibrium between L-OPA1 and S-OPA1, inhibiting mitochondrial fusion. The balance between L-OPA1 and S-OPA1 also influences cristae shape and morphology. Its role in mitochondrial morphology is required for mitochondrial genome maintenance. In terms of biological role, constitutes the transmembrane long form (L-OPA1) that plays a central role in mitochondrial inner membrane fusion and cristae morphology. L-OPA1 and the soluble short form (S-OPA1) form higher-order helical assemblies that coordinate the fusion of mitochondrial inner membranes. Inner membrane-anchored L-OPA1 molecules initiate membrane remodeling by recruiting soluble S-OPA1 to rapidly polymerize into a flexible cylindrical scaffold encaging the mitochondrial inner membrane. Once at the membrane surface, the formation of S-OPA1 helices induce bilayer curvature. OPA1 dimerization through the paddle region, which inserts into cardiolipin-containing membrane, promotes GTP hydrolysis and the helical assembly of a flexible OPA1 lattice on the membrane, which drives membrane curvature and mitochondrial fusion. Plays a role in the maintenance and remodeling of mitochondrial cristae, some invaginations of the mitochondrial inner membrane that provide an increase in the surface area. Probably acts by forming helical filaments at the inside of inner membrane tubes with the shape and dimensions of crista junctions. Functionally, constitutes the soluble short form (S-OPA1) generated by cleavage by OMA1, which plays a central role in mitochondrial inner membrane fusion and cristae morphology. The transmembrane long form (L-OPA1) and the S-OPA1 form higher-order helical assemblies that coordinate the fusion of mitochondrial inner membranes. Inner membrane-anchored L-OPA1 molecules initiate membrane remodeling by recruiting soluble S-OPA1 to rapidly polymerize into a flexible cylindrical scaffold encaging the mitochondrial inner membrane. Once at the membrane surface, the formation of S-OPA1 helices induce bilayer curvature. OPA1 dimerization through the paddle region, which inserts into cardiolipin-containing membrane, promotes GTP hydrolysis and the helical assembly of a flexible OPA1 lattice on the membrane, which drives membrane curvature and mitochondrial fusion. Excess levels of S-OPA1 produced by cleavage by OMA1 following stress conditions that induce loss of mitochondrial membrane potential, lead to an impaired equilibrium between L-OPA1 and S-OPA1, thereby inhibiting mitochondrial fusion. Plays a role in the maintenance and remodeling of mitochondrial cristae, some invaginations of the mitochondrial inner membrane that provide an increase in the surface area. Probably acts by forming helical filaments at the inside of inner membrane tubes with the shape and dimensions of crista junctions. In Gallus gallus (Chicken), this protein is Dynamin-like GTPase OPA1, mitochondrial.